We begin with the raw amino-acid sequence, 372 residues long: M protein, serotype 2.2 (372 aa).

Residues 1-41 (MARQQTKKNYSLRKLKTGTASVAVALTVLGAGFANQTEVRA) form the signal peptide. 3 C repeats span residues 124–158 (AKTT…EAKH), 166–200 (KKLT…EAKY), and 215–249 (QKLE…TSEL). Basic and acidic residues-rich tracts occupy residues 125–169 (KTTK…KKLT), 226–246 (TSRK…KKVT), and 260–274 (EESK…AELQ). Disordered stretches follow at residues 125–191 (KTTK…ASRA) and 211–274 (EAKH…AELQ). 4 D repeats span residues 275–280 (AKLDAQ), 281–286 (GKALKE), 289–294 (AKQTEE), and 296–301 (AKLRAE). Residues 295–304 (LAKLRAEKAA) are compositionally biased toward basic and acidic residues. The disordered stretch occupies residues 295–344 (LAKLRAEKAAGSKTPATKPANKERSGRAAQTATRPSQNKGMRSQLPSTGE). Polar residues predominate over residues 322 to 341 (AAQTATRPSQNKGMRSQLPS). Residues 339 to 343 (LPSTG) carry the LPXTG sorting signal motif. Thr-342 is modified (pentaglycyl murein peptidoglycan amidated threonine). A propeptide spans 343–372 (GEAANPFFTAAAATVMVSAGMLALKRKEEN) (removed by sortase).

This sequence belongs to the M protein family.

The protein localises to the secreted. The protein resides in the cell wall. Functionally, this protein is one of the different antigenic serotypes of protein M. Protein M is closely associated with virulence of the bacterium and can render the organism resistant to phagocytosis. This Streptococcus pyogenes protein is M protein, serotype 2.2 (emmL2.2).